We begin with the raw amino-acid sequence, 174 residues long: Crossover junction endodeoxyribonuclease RuvC (174 aa).

Active-site residues include aspartate 8, glutamate 67, and aspartate 139. Residues aspartate 8, glutamate 67, and aspartate 139 each coordinate Mg(2+).

It belongs to the RuvC family. In terms of assembly, homodimer which binds Holliday junction (HJ) DNA. The HJ becomes 2-fold symmetrical on binding to RuvC with unstacked arms; it has a different conformation from HJ DNA in complex with RuvA. In the full resolvosome a probable DNA-RuvA(4)-RuvB(12)-RuvC(2) complex forms which resolves the HJ. It depends on Mg(2+) as a cofactor.

It is found in the cytoplasm. It carries out the reaction Endonucleolytic cleavage at a junction such as a reciprocal single-stranded crossover between two homologous DNA duplexes (Holliday junction).. Functionally, the RuvA-RuvB-RuvC complex processes Holliday junction (HJ) DNA during genetic recombination and DNA repair. Endonuclease that resolves HJ intermediates. Cleaves cruciform DNA by making single-stranded nicks across the HJ at symmetrical positions within the homologous arms, yielding a 5'-phosphate and a 3'-hydroxyl group; requires a central core of homology in the junction. The consensus cleavage sequence is 5'-(A/T)TT(C/G)-3'. Cleavage occurs on the 3'-side of the TT dinucleotide at the point of strand exchange. HJ branch migration catalyzed by RuvA-RuvB allows RuvC to scan DNA until it finds its consensus sequence, where it cleaves and resolves the cruciform DNA. This is Crossover junction endodeoxyribonuclease RuvC from Pseudomonas aeruginosa (strain LESB58).